The following is a 254-amino-acid chain: 5'-nucleotidase SurE (254 aa).

Positions 8, 9, 40, and 93 each coordinate a divalent metal cation.

It belongs to the SurE nucleotidase family. A divalent metal cation serves as cofactor.

The protein localises to the cytoplasm. The enzyme catalyses a ribonucleoside 5'-phosphate + H2O = a ribonucleoside + phosphate. Its function is as follows. Nucleotidase that shows phosphatase activity on nucleoside 5'-monophosphates. This Methylorubrum extorquens (strain CM4 / NCIMB 13688) (Methylobacterium extorquens) protein is 5'-nucleotidase SurE.